The following is a 421-amino-acid chain: Early growth response protein 2 (421 aa).

Over residues 127-145 (CSSTSSSNASSGSPNLSCS) the composition is skewed to low complexity. Disordered regions lie at residues 127–152 (CSSTSSSNASSGSPNLSCSMSHPQSD), 179–200 (SPTAASLPPPPSYPSPKGASDG), and 223–288 (SDRK…ERPY). Residues 236–247 (PLSTIRNFTLGG) show a composition bias toward polar residues. 3 C2H2-type zinc fingers span residues 288–312 (YPCPAEGCDRRFSRSDELTRHIRIH), 318–340 (FQCRICMRNFSRSDHLTTHIRTH), and 346–368 (FACDYCGRKFARSDERKRHTKIH).

The protein belongs to the EGR C2H2-type zinc-finger protein family.

It is found in the nucleus. Sequence-specific DNA-binding transcription factor. This chain is Early growth response protein 2 (egr2), found in Xenopus laevis (African clawed frog).